Here is a 425-residue protein sequence, read N- to C-terminus: MTKVVIENVHAREIFDSRGNPTVEVEVTLSNGVVGRAEVPSGASTGENEAVELRDGGSRLGGKGVMKAVNNVNTAINNELQGADPFNQPAIDKAMIELDGTPNKGKLGANAILGTSMATAVAAAKATHQPLYRYLGGTDLSMPQTFHNVINGGEHADNGIDIQEFMITPVKKTSFRDGFEKIVNTYHTLKKVLEEKGYETGLGDEGGFAPNMKDSEEALKALHEAIERAGYVPGEDIAIACDCAASYYYNKEDGKYHLEGKVLDGDQLAEYYDKLLAEFPELISMEDPYDENDTEGMVKFTQSHKDRLQIVLDDFICTNPRLLEKAIKEGAGNASLIKLNQIGTVTETLETIRISRKHGYNTMISHRSGETGDTFIADFAVATNGGQLKTGAPARSERVEKYNQLLRIEEQLGDGERLDFFPAQD.

Gln-163 lines the (2R)-2-phosphoglycerate pocket. Glu-205 (proton donor) is an active-site residue. Residues Asp-242, Glu-286, and Asp-313 each coordinate Mg(2+). The (2R)-2-phosphoglycerate site is built by Lys-338, Arg-367, Ser-368, and Lys-389. The active-site Proton acceptor is Lys-338.

This sequence belongs to the enolase family. It depends on Mg(2+) as a cofactor.

The protein localises to the cytoplasm. It is found in the secreted. It localises to the cell surface. The enzyme catalyses (2R)-2-phosphoglycerate = phosphoenolpyruvate + H2O. The protein operates within carbohydrate degradation; glycolysis; pyruvate from D-glyceraldehyde 3-phosphate: step 4/5. Functionally, catalyzes the reversible conversion of 2-phosphoglycerate (2-PG) into phosphoenolpyruvate (PEP). It is essential for the degradation of carbohydrates via glycolysis. The chain is Enolase from Lactobacillus delbrueckii subsp. bulgaricus (strain ATCC 11842 / DSM 20081 / BCRC 10696 / JCM 1002 / NBRC 13953 / NCIMB 11778 / NCTC 12712 / WDCM 00102 / Lb 14).